Here is a 100-residue protein sequence, read N- to C-terminus: Putative membrane protein insertion efficiency factor (100 aa).

The tract at residues 73-100 (DPVPDLPGSAPEENGRPSPDGQHSGSGG) is disordered.

Belongs to the UPF0161 family.

The protein resides in the cell inner membrane. Could be involved in insertion of integral membrane proteins into the membrane. The chain is Putative membrane protein insertion efficiency factor from Synechococcus sp. (strain JA-3-3Ab) (Cyanobacteria bacterium Yellowstone A-Prime).